The chain runs to 412 residues: Multifunctional CCA protein (412 aa).

Positions 8 and 11 each coordinate ATP. Gly8 and Arg11 together coordinate CTP. Mg(2+) is bound by residues Asp21 and Asp23. The ATP site is built by Arg91, Arg137, and Arg140. Residues Arg91, Arg137, and Arg140 each contribute to the CTP site. An HD domain is found at 228 to 329 (TGIHTLMTLS…VKLFDSIDAW (102 aa)).

It belongs to the tRNA nucleotidyltransferase/poly(A) polymerase family. Bacterial CCA-adding enzyme type 1 subfamily. Monomer. Can also form homodimers and oligomers. Mg(2+) serves as cofactor. The cofactor is Ni(2+).

It catalyses the reaction a tRNA precursor + 2 CTP + ATP = a tRNA with a 3' CCA end + 3 diphosphate. It carries out the reaction a tRNA with a 3' CCA end + 2 CTP + ATP = a tRNA with a 3' CCACCA end + 3 diphosphate. Functionally, catalyzes the addition and repair of the essential 3'-terminal CCA sequence in tRNAs without using a nucleic acid template. Adds these three nucleotides in the order of C, C, and A to the tRNA nucleotide-73, using CTP and ATP as substrates and producing inorganic pyrophosphate. tRNA 3'-terminal CCA addition is required both for tRNA processing and repair. Also involved in tRNA surveillance by mediating tandem CCA addition to generate a CCACCA at the 3' terminus of unstable tRNAs. While stable tRNAs receive only 3'-terminal CCA, unstable tRNAs are marked with CCACCA and rapidly degraded. The sequence is that of Multifunctional CCA protein from Escherichia coli (strain SMS-3-5 / SECEC).